Reading from the N-terminus, the 320-residue chain is o-succinylbenzoate synthase (320 aa).

Lys133 (proton donor) is an active-site residue. Mg(2+)-binding residues include Asp161, Glu190, and Asp213. The active-site Proton acceptor is Lys235.

The protein belongs to the mandelate racemase/muconate lactonizing enzyme family. MenC type 1 subfamily. A divalent metal cation is required as a cofactor.

The catalysed reaction is (1R,6R)-6-hydroxy-2-succinyl-cyclohexa-2,4-diene-1-carboxylate = 2-succinylbenzoate + H2O. It functions in the pathway quinol/quinone metabolism; 1,4-dihydroxy-2-naphthoate biosynthesis; 1,4-dihydroxy-2-naphthoate from chorismate: step 4/7. The protein operates within quinol/quinone metabolism; menaquinone biosynthesis. In terms of biological role, converts 2-succinyl-6-hydroxy-2,4-cyclohexadiene-1-carboxylate (SHCHC) to 2-succinylbenzoate (OSB). This chain is o-succinylbenzoate synthase, found in Escherichia coli O157:H7.